Consider the following 346-residue polypeptide: B3 domain-containing protein At5g60142 (346 aa).

Residues 13–109 (PKFFKVYLPD…CFNFCIYGRA (97 aa)) constitute a DNA-binding region (TF-B3). Disordered regions lie at residues 158-179 (QDYN…ADND) and 192-243 (TSSE…HDRQ). Residues 192 to 217 (TSSEDIIVIDDDDDDDDQDYGDDDHA) show a composition bias toward acidic residues. The span at 218-229 (DVEKERWRGVKT) shows a compositional bias: basic and acidic residues.

Its subcellular location is the nucleus. In Arabidopsis thaliana (Mouse-ear cress), this protein is B3 domain-containing protein At5g60142.